Reading from the N-terminus, the 261-residue chain is Proline-rich protein HaeIII subfamily 1 (261 aa).

The signal sequence occupies residues 1 to 15; it reads MLVVLFTVALLALSS. The interval 15-261 is disordered; that stretch reads SAQGPREENQ…PPQGRPQGPR (247 aa). Composition is skewed to pro residues over residues 32–44 and 51–237; these read QRPP…PRPP and GPPP…PPTG. The segment covering 238–261 has biased composition (low complexity); the sequence is GPQQTPPLAGNTQGPPQGRPQGPR.

Its subcellular location is the secreted. This Mus musculus (Mouse) protein is Proline-rich protein HaeIII subfamily 1 (Prh1).